The primary structure comprises 1077 residues: Adenylate cyclase type 4 (1077 aa).

At 1–28 (MARLFSPRPPPSEDLFYETYYSLSQQYP) the chain is on the cytoplasmic side. The next 6 membrane-spanning stretches (helical) occupy residues 29–50 (LLLL…VAWA), 61–80 (FLTT…GLAS), 94–117 (GLVW…VSAW), 120–138 (VSYF…PLGM), 141–162 (AAVA…YLGP), and 170–190 (LLPQ…AGVY). At 191–585 (HKALMERALR…YRLSAIPAFK (395 aa)) the chain is on the cytoplasmic side. The Mg(2+) site is built by Asp-278, Ile-279, and Asp-322. ATP is bound by residues 278–283 (DIVGFT), 320–322 (LGD), and Arg-366. Position 520 is a phosphoserine (Ser-520). The residue at position 536 (Thr-536) is a Phosphothreonine. 3 helical membrane passes run 586–607 (YYEA…LVTN), 611–633 (ALAI…CFSE), and 664–687 (IALG…FFPT). Residues 688–714 (SSDCPFQAPNVSSMISNLSWELPGSLP) are Extracellular-facing. Residues Asn-697 and Asn-704 are each glycosylated (N-linked (GlcNAc...) asparagine). The next 3 helical transmembrane spans lie at 715–736 (LISV…SLFL), 744–764 (LLLL…SHAW), and 791–807 (MGAI…LVLA). Topologically, residues 808–1077 (RQNEYYCRLD…RTGPPSATLG (270 aa)) are cytoplasmic. ATP-binding positions include Lys-925, 1005 to 1007 (DIW), 1012 to 1016 (NVASR), and Lys-1052.

It belongs to the adenylyl cyclase class-4/guanylyl cyclase family. Requires Mg(2+) as cofactor. Mn(2+) is required as a cofactor. Detected in the zona glomerulosa and the zona fasciculata in the adrenal gland (at protein level).

The protein resides in the cell membrane. Its subcellular location is the cytoplasm. It carries out the reaction ATP = 3',5'-cyclic AMP + diphosphate. Activated by forskolin. Insensitive to calcium/calmodulin. Stimulated by GNAS and by the G-protein beta and gamma subunit complex. Its function is as follows. Catalyzes the formation of the signaling molecule cAMP in response to G-protein signaling. The polypeptide is Adenylate cyclase type 4 (ADCY4) (Homo sapiens (Human)).